The primary structure comprises 341 residues: Anthranilate phosphoribosyltransferase (341 aa).

Residues Gly-79, 82–83, Thr-87, 89–92, 107–115, and Ser-119 contribute to the 5-phospho-alpha-D-ribose 1-diphosphate site; these read GD, NIST, and KHGNRSISS. Residue Gly-79 coordinates anthranilate. Ser-91 contributes to the Mg(2+) binding site. Asn-110 lines the anthranilate pocket. An anthranilate-binding site is contributed by Arg-164. Residues Asp-222 and Glu-223 each contribute to the Mg(2+) site.

Belongs to the anthranilate phosphoribosyltransferase family. As to quaternary structure, homodimer. Mg(2+) serves as cofactor.

The catalysed reaction is N-(5-phospho-beta-D-ribosyl)anthranilate + diphosphate = 5-phospho-alpha-D-ribose 1-diphosphate + anthranilate. The protein operates within amino-acid biosynthesis; L-tryptophan biosynthesis; L-tryptophan from chorismate: step 2/5. In terms of biological role, catalyzes the transfer of the phosphoribosyl group of 5-phosphorylribose-1-pyrophosphate (PRPP) to anthranilate to yield N-(5'-phosphoribosyl)-anthranilate (PRA). The polypeptide is Anthranilate phosphoribosyltransferase (Blochmanniella pennsylvanica (strain BPEN)).